Consider the following 249-residue polypeptide: Methyl-coenzyme M reductase I subunit gamma (249 aa).

Arginine 120 provides a ligand contact to coenzyme M.

This sequence belongs to the methyl-coenzyme M reductase gamma subunit family. MCR is a hexamer of two alpha, two beta, and two gamma chains, forming a dimer of heterotrimers. Requires coenzyme F430 as cofactor.

The protein resides in the cytoplasm. The catalysed reaction is coenzyme B + methyl-coenzyme M = methane + coenzyme M-coenzyme B heterodisulfide. The protein operates within one-carbon metabolism; methyl-coenzyme M reduction; methane from methyl-coenzyme M: step 1/1. Functionally, component of the methyl-coenzyme M reductase (MCR) I that catalyzes the reductive cleavage of methyl-coenzyme M (CoM-S-CH3 or 2-(methylthio)ethanesulfonate) using coenzyme B (CoB or 7-mercaptoheptanoylthreonine phosphate) as reductant which results in the production of methane and the mixed heterodisulfide of CoB and CoM (CoM-S-S-CoB). This is the final step in methanogenesis. This Methanothermobacter thermautotrophicus (strain ATCC 29096 / DSM 1053 / JCM 10044 / NBRC 100330 / Delta H) (Methanobacterium thermoautotrophicum) protein is Methyl-coenzyme M reductase I subunit gamma (mcrG).